Here is a 214-residue protein sequence, read N- to C-terminus: Probable GTP-binding protein EngB (214 aa).

An EngB-type G domain is found at 22–194; sequence HLPEIAFAGR…WARIDALLEP (173 aa). GTP-binding positions include 30 to 37, 57 to 61, 75 to 78, 142 to 145, and 173 to 175; these read GRSNVGKS, GRTQL, DLPG, TKCD, and FSA. Positions 37 and 59 each coordinate Mg(2+). The disordered stretch occupies residues 195–214; that stretch reads TAAETPGIPEEPAPPGPVND. Positions 203–214 are enriched in pro residues; sequence PEEPAPPGPVND.

This sequence belongs to the TRAFAC class TrmE-Era-EngA-EngB-Septin-like GTPase superfamily. EngB GTPase family. The cofactor is Mg(2+).

In terms of biological role, necessary for normal cell division and for the maintenance of normal septation. The protein is Probable GTP-binding protein EngB of Geobacter sp. (strain M21).